Here is a 194-residue protein sequence, read N- to C-terminus: Adapter protein MecA 2 (194 aa).

Belongs to the MecA family. Homodimer.

Its function is as follows. Enables the recognition and targeting of unfolded and aggregated proteins to the ClpC protease or to other proteins involved in proteolysis. Also involved in Spx degradation by ClpC. Acts negatively in the development of competence by binding ComK and recruiting it to the ClpCP protease. When overexpressed, inhibits sporulation. The protein is Adapter protein MecA 2 (mecB) of Bacillus subtilis (strain 168).